Reading from the N-terminus, the 90-residue chain is YcgL domain-containing protein YE2368 (90 aa).

Positions 1–85 (MLCAIYRSPK…PPESLLKMHL (85 aa)) constitute a YcgL domain.

The sequence is that of YcgL domain-containing protein YE2368 from Yersinia enterocolitica serotype O:8 / biotype 1B (strain NCTC 13174 / 8081).